The chain runs to 95 residues: Co-chaperonin GroES (95 aa).

Belongs to the GroES chaperonin family. As to quaternary structure, heptamer of 7 subunits arranged in a ring. Interacts with the chaperonin GroEL.

It is found in the cytoplasm. Functionally, together with the chaperonin GroEL, plays an essential role in assisting protein folding. The GroEL-GroES system forms a nano-cage that allows encapsulation of the non-native substrate proteins and provides a physical environment optimized to promote and accelerate protein folding. GroES binds to the apical surface of the GroEL ring, thereby capping the opening of the GroEL channel. The protein is Co-chaperonin GroES of Deinococcus radiodurans (strain ATCC 13939 / DSM 20539 / JCM 16871 / CCUG 27074 / LMG 4051 / NBRC 15346 / NCIMB 9279 / VKM B-1422 / R1).